We begin with the raw amino-acid sequence, 139 residues long: Large ribosomal subunit protein eL32 (139 aa).

The protein belongs to the eukaryotic ribosomal protein eL32 family.

In Encephalitozoon cuniculi (strain GB-M1) (Microsporidian parasite), this protein is Large ribosomal subunit protein eL32 (RPL32).